Consider the following 331-residue polypeptide: Induced myeloid leukemia cell differentiation protein Mcl-1 homolog (331 aa).

The PEST-like stretch occupies residues 85-156 (LAVPPEEMAA…PPEEEEDDLY (72 aa)). Ser102 is modified (phosphoserine). A Glycyl lysine isopeptide (Lys-Gly) (interchain with G-Cter in ubiquitin) cross-link involves residue Lys117. The tract at residues 130-154 (EAAKSSGADGSLPSTPPPPEEEEDD) is disordered. The residue at position 140 (Ser140) is a Phosphoserine; by GSK3-alpha and GSK3-beta. Ser143 is modified (phosphoserine). Thr144 is subject to Phosphothreonine; by MAPK. Glycyl lysine isopeptide (Lys-Gly) (interchain with G-Cter in ubiquitin) cross-links involve residues Lys175 and Lys178. A BH3 motif is present at residues 190–204 (ALETLRRVGDGVQRN). Residues 234–253 (VFKDGVTNWGRIVTLISFGA) carry the BH1 motif. A BH2 motif is present at residues 285–300 (DWLVKQRGWDGFVEFF). A helical membrane pass occupies residues 308–330 (GIRNVLLAFAGVAGVGAGLAYLI).

The protein belongs to the Bcl-2 family. In terms of assembly, interacts with HIF3A isoform 2 (via C-terminus domain). Interacts with BAD, BOK, BIK, BAX, BAK1, and TPT1. Interacts with BBC3, BMF and PMAIP1. Interacts with BOP. Interacts with BCL2L11; this interaction may sequester BCL2L11 and prevent its pro-apoptotic activity. Interacts with GIMAP5 and HSPA8/HSC70; the interaction between HSPA8 and MCL1 is impaired in the absence of GIMAP5. Post-translationally, cleaved by CASP3 during apoptosis, yielding a pro-apoptotic C-terminal fragment. Rapidly degraded in the absence of phosphorylation in the PEST region. In terms of processing, phosphorylated on Ser-140, by GSK3, in response to IL3/interleukin-3 withdrawal. Phosphorylation at Ser-140 induces ubiquitination and proteasomal degradation, abrogating the anti-apoptotic activity. Treatment with taxol or okadaic acid induces phosphorylation on additional sites. Post-translationally, ubiquitinated. Ubiquitination is induced by phosphorylation at Ser-140. Deubiquitinated by USP20; leading to increased stability.

Its subcellular location is the membrane. It localises to the cytoplasm. The protein resides in the mitochondrion. It is found in the nucleus. The protein localises to the nucleoplasm. Its function is as follows. Involved in the regulation of apoptosis versus cell survival, and in the maintenance of viability but not of proliferation. Mediates its effects by interactions with a number of other regulators of apoptosis. Isoform 2 has antiapoptotic activity. The polypeptide is Induced myeloid leukemia cell differentiation protein Mcl-1 homolog (Mcl1) (Mus musculus (Mouse)).